Consider the following 65-residue polypeptide: Omega-lycotoxin-Am1f (65 aa).

Positions 1–18 (GDEEDEVEETLPVAEEGR) are excised as a propeptide. 4 disulfides stabilise this stretch: Cys-22-Cys-37, Cys-29-Cys-42, Cys-36-Cys-62, and Cys-44-Cys-60.

This sequence belongs to the neurotoxin omega-lctx family. In terms of tissue distribution, expressed by the venom gland.

The protein localises to the secreted. Modulates Cav2.1/CACNA1A voltage-gated calcium channels (P/Q-type currents) in rat cerebellar Purkinje cells and hippocampal CA1-CA3 neurons. At saturating concentrations (&gt;10 nM) decelerates activation kinetics and slightly increases peak amplitude without affecting deactivation kinetics. In vivo, does not cause death when intravenously injected into mice. In rat models, through its activity on Cav2.1/CACNA1A, has an ameliorative effect on memory defects provoked by hyperstimulation of N-methyl-D-aspartate receptors (NMDARs) in the hippocampus. The chain is Omega-lycotoxin-Am1f from Alopecosa marikovskyi (Wolf spider).